The sequence spans 147 residues: MLQEFKTFIMKGNVLDLAVGVIIGAAFGKIVNSAVNDLIMPVVGLALGKVDFSNLFISLKGGEYATVAAAKAAGAPTLNYGIFLNTTLDFLIMALVIFMIIKAANKVRKTEEPAPAPVPRECPFCKSAVHDEASRCPHCTSQLNATA.

The next 2 membrane-spanning stretches (helical) occupy residues 8 to 28 and 81 to 101; these read FIMKGNVLDLAVGVIIGAAFG and GIFLNTTLDFLIMALVIFMII.

This sequence belongs to the MscL family. In terms of assembly, homopentamer.

The protein resides in the cell inner membrane. Functionally, channel that opens in response to stretch forces in the membrane lipid bilayer. May participate in the regulation of osmotic pressure changes within the cell. The polypeptide is Large-conductance mechanosensitive channel (Trichlorobacter lovleyi (strain ATCC BAA-1151 / DSM 17278 / SZ) (Geobacter lovleyi)).